Here is a 216-residue protein sequence, read N- to C-terminus: 3-isopropylmalate dehydratase small subunit (216 aa).

It belongs to the LeuD family. LeuD type 1 subfamily. In terms of assembly, heterodimer of LeuC and LeuD.

It catalyses the reaction (2R,3S)-3-isopropylmalate = (2S)-2-isopropylmalate. The protein operates within amino-acid biosynthesis; L-leucine biosynthesis; L-leucine from 3-methyl-2-oxobutanoate: step 2/4. Functionally, catalyzes the isomerization between 2-isopropylmalate and 3-isopropylmalate, via the formation of 2-isopropylmaleate. In Bordetella avium (strain 197N), this protein is 3-isopropylmalate dehydratase small subunit.